The chain runs to 485 residues: Cysteine--tRNA ligase (485 aa).

A Zn(2+)-binding site is contributed by Cys27. Positions 29–39 (ITAYDLCHIGH) match the 'HIGH' region motif. Residues Cys208, His233, and Glu237 each contribute to the Zn(2+) site. The short motif at 265 to 269 (KMSKS) is the 'KMSKS' region element. Lys268 lines the ATP pocket.

The protein belongs to the class-I aminoacyl-tRNA synthetase family. In terms of assembly, monomer. Zn(2+) serves as cofactor.

Its subcellular location is the cytoplasm. The enzyme catalyses tRNA(Cys) + L-cysteine + ATP = L-cysteinyl-tRNA(Cys) + AMP + diphosphate. The sequence is that of Cysteine--tRNA ligase from Nitratidesulfovibrio vulgaris (strain DSM 19637 / Miyazaki F) (Desulfovibrio vulgaris).